The following is a 335-amino-acid chain: Atypical chemokine receptor 1 (335 aa).

Residues 1-62 lie on the Extracellular side of the membrane; sequence MGNCLHPAEL…CNLLDDSALP (62 aa). 3 N-linked (GlcNAc...) asparagine glycosylation sites follow: Asn-16, Asn-26, and Asn-32. Disulfide bonds link Cys-50–Cys-275 and Cys-128–Cys-194. Residues 63-83 form a helical membrane-spanning segment; that stretch reads FFILVSVLGILASGTVLFMFF. The Cytoplasmic segment spans residues 84-94; sequence RPLFHWQLCPG. The chain crosses the membrane as a helical span at residues 95 to 115; the sequence is WPVLAQLAVGSALFSIVVPIL. Residues 116 to 128 are Extracellular-facing; sequence APGLGNTRSSALC. A helical membrane pass occupies residues 129–152; the sequence is SLGYCVWYGSAFAQALLLGCHASL. Residues 153–165 are Cytoplasmic-facing; the sequence is GPKLGAGQVPGLT. The helical transmembrane segment at 166-186 threads the bilayer; sequence LGLSVGLWGVAALLTLPITLA. Residues 187–206 are Extracellular-facing; that stretch reads SGASGGLCTPAYSMELKALQ. The chain crosses the membrane as a helical span at residues 207-227; the sequence is ATHAVACLAVFVLLPLGLFGA. Topologically, residues 228-243 are cytoplasmic; that stretch reads KGLKKALGMGPGPWMN. Residues 244–264 traverse the membrane as a helical segment; the sequence is ILWAWFIFWWPHGVVLGLDFL. Topologically, residues 265–286 are extracellular; it reads VRSKLLLLSTCLAQQALDLLLN. The chain crosses the membrane as a helical span at residues 287-307; the sequence is LAEALAILHCVATPLLLALFC. The Cytoplasmic portion of the chain corresponds to 308-335; that stretch reads HQATRTLLPSLPLPEGWSSHLDTLGSES.

It belongs to the G-protein coupled receptor 1 family. Atypical chemokine receptor subfamily. (Microbial infection) Interacts (via N-terminal extracellular domain) with Plasmodium knowlesi Duffy receptor alpha form (DBPalpha) (via region II).

Its subcellular location is the early endosome. The protein resides in the recycling endosome. It is found in the membrane. Atypical chemokine receptor that controls chemokine levels and localization via high-affinity chemokine binding that is uncoupled from classic ligand-driven signal transduction cascades, resulting instead in chemokine sequestration, degradation, or transcytosis. Also known as interceptor (internalizing receptor) or chemokine-scavenging receptor or chemokine decoy receptor. Has a promiscuous chemokine-binding profile, interacting with inflammatory chemokines of both the CXC and the CC subfamilies but not with homeostatic chemokines. Acts as a receptor for chemokines including CCL2, CCL5, CCL7, CCL11, CCL13, CCL14, CCL17, CXCL5, CXCL6, IL8/CXCL8, CXCL11, GRO, RANTES, MCP-1 and TARC. May regulate chemokine bioavailability and, consequently, leukocyte recruitment through two distinct mechanisms: when expressed in endothelial cells, it sustains the abluminal to luminal transcytosis of tissue-derived chemokines and their subsequent presentation to circulating leukocytes; when expressed in erythrocytes, serves as blood reservoir of cognate chemokines but also as a chemokine sink, buffering potential surges in plasma chemokine levels. Its function is as follows. (Microbial infection) Acts as a receptor for the malaria parasite Plasmodium knowlesi. This is Atypical chemokine receptor 1 (ACKR1) from Macaca mulatta (Rhesus macaque).